A 98-amino-acid polypeptide reads, in one-letter code: Aspartyl/glutamyl-tRNA(Asn/Gln) amidotransferase subunit C (98 aa).

Belongs to the GatC family. As to quaternary structure, heterotrimer of A, B and C subunits.

It carries out the reaction L-glutamyl-tRNA(Gln) + L-glutamine + ATP + H2O = L-glutaminyl-tRNA(Gln) + L-glutamate + ADP + phosphate + H(+). The catalysed reaction is L-aspartyl-tRNA(Asn) + L-glutamine + ATP + H2O = L-asparaginyl-tRNA(Asn) + L-glutamate + ADP + phosphate + 2 H(+). Allows the formation of correctly charged Asn-tRNA(Asn) or Gln-tRNA(Gln) through the transamidation of misacylated Asp-tRNA(Asn) or Glu-tRNA(Gln) in organisms which lack either or both of asparaginyl-tRNA or glutaminyl-tRNA synthetases. The reaction takes place in the presence of glutamine and ATP through an activated phospho-Asp-tRNA(Asn) or phospho-Glu-tRNA(Gln). The chain is Aspartyl/glutamyl-tRNA(Asn/Gln) amidotransferase subunit C from Mycobacterium avium (strain 104).